Here is a 167-residue protein sequence, read N- to C-terminus: Urease accessory protein UreE (167 aa).

The disordered stretch occupies residues 137–158 (EAGAYQSAPHGHSHSHAHGHDH).

It belongs to the UreE family.

It is found in the cytoplasm. Its function is as follows. Involved in urease metallocenter assembly. Binds nickel. Probably functions as a nickel donor during metallocenter assembly. The protein is Urease accessory protein UreE of Pseudomonas putida (strain ATCC 700007 / DSM 6899 / JCM 31910 / BCRC 17059 / LMG 24140 / F1).